The chain runs to 360 residues: Phospho-N-acetylmuramoyl-pentapeptide-transferase (360 aa).

10 helical membrane passes run Gly27–Leu47, Thr71–Ala91, Leu93–Phe113, Leu134–Ala154, Phe168–Gly188, Gly199–Ser219, Leu239–Pro259, Ala262–Val282, Ile288–Val308, and Gln337–Leu357.

This sequence belongs to the glycosyltransferase 4 family. MraY subfamily. Mg(2+) serves as cofactor.

It is found in the cell inner membrane. It carries out the reaction UDP-N-acetyl-alpha-D-muramoyl-L-alanyl-gamma-D-glutamyl-meso-2,6-diaminopimeloyl-D-alanyl-D-alanine + di-trans,octa-cis-undecaprenyl phosphate = di-trans,octa-cis-undecaprenyl diphospho-N-acetyl-alpha-D-muramoyl-L-alanyl-D-glutamyl-meso-2,6-diaminopimeloyl-D-alanyl-D-alanine + UMP. It functions in the pathway cell wall biogenesis; peptidoglycan biosynthesis. In terms of biological role, catalyzes the initial step of the lipid cycle reactions in the biosynthesis of the cell wall peptidoglycan: transfers peptidoglycan precursor phospho-MurNAc-pentapeptide from UDP-MurNAc-pentapeptide onto the lipid carrier undecaprenyl phosphate, yielding undecaprenyl-pyrophosphoryl-MurNAc-pentapeptide, known as lipid I. The sequence is that of Phospho-N-acetylmuramoyl-pentapeptide-transferase from Mesorhizobium japonicum (strain LMG 29417 / CECT 9101 / MAFF 303099) (Mesorhizobium loti (strain MAFF 303099)).